Here is a 223-residue protein sequence, read N- to C-terminus: Large ribosomal subunit protein uL4 (223 aa).

The segment at 49 to 106 (AAARQGTHSTKTRGEVSGGGRKPYRQKGTGRARQGSTRAPQFTGGGVVHGPKPRDYSQ) is disordered.

This sequence belongs to the universal ribosomal protein uL4 family. Part of the 50S ribosomal subunit.

Its function is as follows. One of the primary rRNA binding proteins, this protein initially binds near the 5'-end of the 23S rRNA. It is important during the early stages of 50S assembly. It makes multiple contacts with different domains of the 23S rRNA in the assembled 50S subunit and ribosome. In terms of biological role, forms part of the polypeptide exit tunnel. The sequence is that of Large ribosomal subunit protein uL4 from Mycobacterium bovis (strain ATCC BAA-935 / AF2122/97).